A 309-amino-acid polypeptide reads, in one-letter code: Uracil phosphoribosyltransferase homolog (309 aa).

The tract at residues 1-41 is disordered; sequence MATELQCPDSMPCHNQQVNSASTPSPEQLRPGDPILDHAGG. The segment covering 13–26 has biased composition (polar residues); the sequence is CHNQQVNSASTPSP. A Phosphoserine modification is found at S25. Residues R133, R142, and 176–179 contribute to the GTP site; that span reads EKGN. Position 186 (R186) interacts with 5-phospho-alpha-D-ribose 1-diphosphate. R203 and R232 together coordinate GTP. 238–246 contacts 5-phospho-alpha-D-ribose 1-diphosphate; sequence YPILSTGNT. Position 299-301 (299-301) interacts with uracil; the sequence is THF.

Belongs to the UPRTase family.

The protein resides in the cytoplasm. Its subcellular location is the nucleus. This is Uracil phosphoribosyltransferase homolog (UPRT) from Macaca fascicularis (Crab-eating macaque).